The primary structure comprises 162 residues: Toluate 1,2-dioxygenase subunit beta (162 aa).

Belongs to the bacterial ring-hydroxylating dioxygenase beta subunit family. As to quaternary structure, this dioxygenase system consists of three proteins: the two subunits of the hydroxylase component (XylX and XylY), and an electron transfer component (XylZ).

It functions in the pathway xenobiotic degradation; toluene degradation. The sequence is that of Toluate 1,2-dioxygenase subunit beta (xylY) from Pseudomonas putida (Arthrobacter siderocapsulatus).